Reading from the N-terminus, the 323-residue chain is Aldo-keto reductase family 1 member C1 (323 aa).

NADP(+) is bound by residues 20–24 and aspartate 50; that span reads GFGTY. Tyrosine 24 contacts substrate. The active-site Proton donor is tyrosine 55. Histidine 117 lines the substrate pocket. Residues 166–167, glutamine 190, and 216–222 contribute to the NADP(+) site; these read SN and YSALGSH. Residues histidine 222 and tryptophan 227 each coordinate substrate. 270–280 is a binding site for NADP(+); that stretch reads KSYNEQRIREN.

It belongs to the aldo/keto reductase family. As to quaternary structure, monomer. As to expression, expressed in liver, adrenal gland, intestine and kidney.

It is found in the cytoplasm. Its subcellular location is the cytosol. It carries out the reaction a 3alpha-hydroxysteroid + NADP(+) = a 3-oxosteroid + NADPH + H(+). The enzyme catalyses a 3alpha-hydroxysteroid + NAD(+) = a 3-oxosteroid + NADH + H(+). It catalyses the reaction (17R,20S)-17,20-dihydroxypregn-4-en-3-one + NADP(+) = 17alpha-hydroxyprogesterone + NADPH + H(+). The catalysed reaction is (17R,20S)-17,20-dihydroxypregn-4-en-3-one + NAD(+) = 17alpha-hydroxyprogesterone + NADH + H(+). It carries out the reaction (20S)-hydroxypregn-4-en-3-one + NADP(+) = progesterone + NADPH + H(+). The enzyme catalyses (20S)-hydroxypregn-4-en-3-one + NAD(+) = progesterone + NADH + H(+). It catalyses the reaction (1R,2R)-1,2-dihydrobenzene-1,2-diol + NADP(+) = catechol + NADPH + H(+). The catalysed reaction is (S)-indan-1-ol + NAD(+) = indan-1-one + NADH + H(+). It carries out the reaction (S)-indan-1-ol + NADP(+) = indan-1-one + NADPH + H(+). The enzyme catalyses 5alpha-androstane-3alpha,17beta-diol + NADP(+) = 17beta-hydroxy-5alpha-androstan-3-one + NADPH + H(+). It catalyses the reaction 5alpha-androstane-3beta,17beta-diol + NADP(+) = 17beta-hydroxy-5alpha-androstan-3-one + NADPH + H(+). The catalysed reaction is 5alpha-androstane-3alpha,17beta-diol + NAD(+) = 17beta-hydroxy-5alpha-androstan-3-one + NADH + H(+). It carries out the reaction 17beta-hydroxy-5alpha-androstan-3-one + NADP(+) = 5alpha-androstan-3,17-dione + NADPH + H(+). The enzyme catalyses androsterone + NADP(+) = 5alpha-androstan-3,17-dione + NADPH + H(+). It catalyses the reaction androsterone + NADPH + H(+) = 5alpha-androstane-3alpha,17beta-diol + NADP(+). The catalysed reaction is 5alpha-androstane-3alpha,17beta-diol + NAD(+) = androsterone + NADH + H(+). It carries out the reaction 17beta-estradiol + NADP(+) = estrone + NADPH + H(+). The enzyme catalyses 17beta-estradiol + NAD(+) = estrone + NADH + H(+). It catalyses the reaction testosterone + NADP(+) = androst-4-ene-3,17-dione + NADPH + H(+). The catalysed reaction is 20alpha-hydroxy-5beta-pregnan-3-one + NADP(+) = 5beta-pregnan-3,20-dione + NADPH + H(+). It carries out the reaction 3beta-hydroxy-5beta-pregnane-20-one + NADP(+) = 5beta-pregnan-3,20-dione + NADPH + H(+). The enzyme catalyses 3beta-hydroxy-5beta-pregnane-20-one + NADPH + H(+) = 3beta,20alpha-dihydroxy-5beta-pregnane + NADP(+). It catalyses the reaction (3beta,5alpha,17beta)-3-hydroxyandrostan-17-yl sulfate + NADP(+) = 5alpha-dihydrotestosterone sulfate + NADPH + H(+). Its pathway is steroid metabolism. In terms of biological role, cytosolic aldo-keto reductase that catalyzes the NADH and NADPH-dependent reduction of ketosteroids to hydroxysteroids. Most probably acts as a reductase in vivo since the oxidase activity measured in vitro is inhibited by physiological concentrations of NADPH. Displays a broad positional specificity acting on positions 3, 17 and 20 of steroids and regulates the metabolism of hormones like estrogens and androgens. May also reduce conjugated steroids such as 5alpha-dihydrotestosterone sulfate. Displays affinity for bile acids. This is Aldo-keto reductase family 1 member C1 (AKR1C1) from Macaca fuscata fuscata (Japanese macaque).